The following is a 78-amino-acid chain: D-alanyl carrier protein (78 aa).

A Carrier domain is found at 1-77 (MDLKEQIVEI…KVVAKVESLI (77 aa)). S35 is modified (O-(pantetheine 4'-phosphoryl)serine).

The protein belongs to the DltC family. In terms of processing, 4'-phosphopantetheine is transferred from CoA to a specific serine of apo-DCP.

It is found in the cytoplasm. The protein operates within cell wall biogenesis; lipoteichoic acid biosynthesis. In terms of biological role, carrier protein involved in the D-alanylation of lipoteichoic acid (LTA). The loading of thioester-linked D-alanine onto DltC is catalyzed by D-alanine--D-alanyl carrier protein ligase DltA. The DltC-carried D-alanyl group is further transferred to cell membrane phosphatidylglycerol (PG) by forming an ester bond, probably catalyzed by DltD. D-alanylation of LTA plays an important role in modulating the properties of the cell wall in Gram-positive bacteria, influencing the net charge of the cell wall. This is D-alanyl carrier protein from Leuconostoc mesenteroides subsp. mesenteroides (strain ATCC 8293 / DSM 20343 / BCRC 11652 / CCM 1803 / JCM 6124 / NCDO 523 / NBRC 100496 / NCIMB 8023 / NCTC 12954 / NRRL B-1118 / 37Y).